The sequence spans 207 residues: Thiamine-phosphate synthase (207 aa).

4-amino-2-methyl-5-(diphosphooxymethyl)pyrimidine contacts are provided by residues 36-40 and Asn68; that span reads QLRMK. Positions 69 and 88 each coordinate Mg(2+). Position 106 (Ser106) interacts with 4-amino-2-methyl-5-(diphosphooxymethyl)pyrimidine. 132–134 provides a ligand contact to 2-[(2R,5Z)-2-carboxy-4-methylthiazol-5(2H)-ylidene]ethyl phosphate; the sequence is TNT. Lys135 provides a ligand contact to 4-amino-2-methyl-5-(diphosphooxymethyl)pyrimidine. Residues Gly162 and 182 to 183 contribute to the 2-[(2R,5Z)-2-carboxy-4-methylthiazol-5(2H)-ylidene]ethyl phosphate site; that span reads VS.

The protein belongs to the thiamine-phosphate synthase family. Mg(2+) is required as a cofactor.

It catalyses the reaction 2-[(2R,5Z)-2-carboxy-4-methylthiazol-5(2H)-ylidene]ethyl phosphate + 4-amino-2-methyl-5-(diphosphooxymethyl)pyrimidine + 2 H(+) = thiamine phosphate + CO2 + diphosphate. It carries out the reaction 2-(2-carboxy-4-methylthiazol-5-yl)ethyl phosphate + 4-amino-2-methyl-5-(diphosphooxymethyl)pyrimidine + 2 H(+) = thiamine phosphate + CO2 + diphosphate. The enzyme catalyses 4-methyl-5-(2-phosphooxyethyl)-thiazole + 4-amino-2-methyl-5-(diphosphooxymethyl)pyrimidine + H(+) = thiamine phosphate + diphosphate. Its pathway is cofactor biosynthesis; thiamine diphosphate biosynthesis; thiamine phosphate from 4-amino-2-methyl-5-diphosphomethylpyrimidine and 4-methyl-5-(2-phosphoethyl)-thiazole: step 1/1. In terms of biological role, condenses 4-methyl-5-(beta-hydroxyethyl)thiazole monophosphate (THZ-P) and 2-methyl-4-amino-5-hydroxymethyl pyrimidine pyrophosphate (HMP-PP) to form thiamine monophosphate (TMP). This is Thiamine-phosphate synthase from Methanococcus maripaludis (strain C5 / ATCC BAA-1333).